The sequence spans 242 residues: Small ribosomal subunit protein uS2 (242 aa).

It belongs to the universal ribosomal protein uS2 family.

This chain is Small ribosomal subunit protein uS2, found in Vibrio parahaemolyticus serotype O3:K6 (strain RIMD 2210633).